We begin with the raw amino-acid sequence, 145 residues long: NADH-quinone oxidoreductase subunit A (145 aa).

Helical transmembrane passes span 14–34 (FAVF…GAWF), 66–86 (FYLV…LYAW), and 96–116 (VGFV…FYLV).

Belongs to the complex I subunit 3 family. As to quaternary structure, NDH-1 is composed of 13 different subunits. Subunits NuoA, H, J, K, L, M, N constitute the membrane sector of the complex.

It is found in the cell inner membrane. It carries out the reaction a quinone + NADH + 5 H(+)(in) = a quinol + NAD(+) + 4 H(+)(out). In terms of biological role, NDH-1 shuttles electrons from NADH, via FMN and iron-sulfur (Fe-S) centers, to quinones in the respiratory chain. The immediate electron acceptor for the enzyme in this species is believed to be ubiquinone. Couples the redox reaction to proton translocation (for every two electrons transferred, four hydrogen ions are translocated across the cytoplasmic membrane), and thus conserves the redox energy in a proton gradient. This Erwinia tasmaniensis (strain DSM 17950 / CFBP 7177 / CIP 109463 / NCPPB 4357 / Et1/99) protein is NADH-quinone oxidoreductase subunit A.